A 504-amino-acid chain; its full sequence is Putative BTB/POZ domain-containing protein R842 (504 aa).

The 71-residue stretch at 21–91 (SDVKLILKDN…FYGFKSPSVT (71 aa)) folds into the BTB domain.

Belongs to the mimivirus BTB/WD family.

The sequence is that of Putative BTB/POZ domain-containing protein R842 from Acanthamoeba polyphaga (Amoeba).